A 351-amino-acid polypeptide reads, in one-letter code: Ion-translocating oxidoreductase complex subunit D (351 aa).

Helical transmembrane passes span 20-40, 44-64, 89-109, and 123-143; these read IMLLVILACLPGMLAQVYFFG, LIQVGLASATALIAEGVTLSL, LPPLAPWWMVVMATVFAIIIA, and PAMIGYVVLLISFPVQMTSWL. Residue threonine 187 is modified to FMN phosphoryl threonine. Transmembrane regions (helical) follow at residues 215–235, 244–264, 267–287, 301–321, and 322–342; these read LSGIGWQWVNIGFLIGGLFLL, IPVSFLLSLMFCASLSWVIAP, FAPPMLHLLSGATMLGAFFIA, LIFGALIGLLVWLIRTYGGYP, and DGVAFAVLLANITVPLIDYYT.

The protein belongs to the NqrB/RnfD family. In terms of assembly, the complex is composed of six subunits: RnfA, RnfB, RnfC, RnfD, RnfE and RnfG. It depends on FMN as a cofactor.

The protein localises to the cell inner membrane. Its function is as follows. Part of a membrane-bound complex that couples electron transfer with translocation of ions across the membrane. The chain is Ion-translocating oxidoreductase complex subunit D from Pectobacterium carotovorum subsp. carotovorum (strain PC1).